The chain runs to 154 residues: Transcriptional repressor NrdR (154 aa).

A zinc finger spans residues C3 to C34. Residues P49–E139 form the ATP-cone domain.

It belongs to the NrdR family. Requires Zn(2+) as cofactor.

In terms of biological role, negatively regulates transcription of bacterial ribonucleotide reductase nrd genes and operons by binding to NrdR-boxes. In Pseudomonas putida (strain W619), this protein is Transcriptional repressor NrdR.